The primary structure comprises 510 residues: Histidine ammonia-lyase (510 aa).

A cross-link (5-imidazolinone (Ala-Gly)) is located at residues 143–145; the sequence is ASG. Ser-144 is subject to 2,3-didehydroalanine (Ser).

This sequence belongs to the PAL/histidase family. Contains an active site 4-methylidene-imidazol-5-one (MIO), which is formed autocatalytically by cyclization and dehydration of residues Ala-Ser-Gly.

The protein resides in the cytoplasm. It catalyses the reaction L-histidine = trans-urocanate + NH4(+). Its pathway is amino-acid degradation; L-histidine degradation into L-glutamate; N-formimidoyl-L-glutamate from L-histidine: step 1/3. The sequence is that of Histidine ammonia-lyase from Psychromonas ingrahamii (strain DSM 17664 / CCUG 51855 / 37).